Here is a 101-residue protein sequence, read N- to C-terminus: Interleukin-8 (101 aa).

Residues 1–22 form the signal peptide; that stretch reads MTSKLVVALLAAFMLSAALCEA. Position 27 is a citrulline (Arg-27). 2 disulfides stabilise this stretch: Cys-34-Cys-61 and Cys-36-Cys-77.

This sequence belongs to the intercrine alpha (chemokine CxC) family. Homodimer. Interacts with TNFAIP6 (via Link domain); this interaction interferes with chemokine binding to glycosaminoglycans. In terms of processing, citrullination at Arg-27 prevents proteolysis, and dampens tissue inflammation, it also enhances leukocytosis, possibly through impaired chemokine clearance from the blood circulation.

The protein localises to the secreted. Functionally, chemotactic factor that mediates inflammatory response by attracting neutrophils, basophils, and T-cells to clear pathogens and protect the host from infection. Also plays an important role in neutrophil activation. Released in response to an inflammatory stimulus, exerts its effect by binding to the G-protein-coupled receptors CXCR1 and CXCR2, primarily found in neutrophils, monocytes and endothelial cells. G-protein heterotrimer (alpha, beta, gamma subunits) constitutively binds to CXCR1/CXCR2 receptor and activation by IL8 leads to beta and gamma subunits release from Galpha (GNAI2 in neutrophils) and activation of several downstream signaling pathways including PI3K and MAPK pathways. The polypeptide is Interleukin-8 (CXCL8) (Felis catus (Cat)).